A 264-amino-acid chain; its full sequence is Thymidylate synthase (264 aa).

Residues arginine 21 and 126-127 (RR) contribute to the dUMP site. Residue cysteine 146 is the Nucleophile of the active site. DUMP contacts are provided by residues 166 to 169 (RSAD), asparagine 177, and 207 to 209 (HLY). Aspartate 169 provides a ligand contact to (6R)-5,10-methylene-5,6,7,8-tetrahydrofolate. Alanine 263 contributes to the (6R)-5,10-methylene-5,6,7,8-tetrahydrofolate binding site.

The protein belongs to the thymidylate synthase family. Bacterial-type ThyA subfamily. In terms of assembly, homodimer.

It localises to the cytoplasm. The catalysed reaction is dUMP + (6R)-5,10-methylene-5,6,7,8-tetrahydrofolate = 7,8-dihydrofolate + dTMP. The protein operates within pyrimidine metabolism; dTTP biosynthesis. In terms of biological role, catalyzes the reductive methylation of 2'-deoxyuridine-5'-monophosphate (dUMP) to 2'-deoxythymidine-5'-monophosphate (dTMP) while utilizing 5,10-methylenetetrahydrofolate (mTHF) as the methyl donor and reductant in the reaction, yielding dihydrofolate (DHF) as a by-product. This enzymatic reaction provides an intracellular de novo source of dTMP, an essential precursor for DNA biosynthesis. The chain is Thymidylate synthase from Bradyrhizobium diazoefficiens (strain JCM 10833 / BCRC 13528 / IAM 13628 / NBRC 14792 / USDA 110).